Reading from the N-terminus, the 483-residue chain is Salicylaldehyde dehydrogenase (483 aa).

NAD(+) is bound at residue 228–233 (GSTRVG). Catalysis depends on residues Glu250 and Cys284.

This sequence belongs to the aldehyde dehydrogenase family.

It carries out the reaction salicylaldehyde + NAD(+) + H2O = salicylate + NADH + 2 H(+). It participates in aromatic compound metabolism; naphthalene degradation. The polypeptide is Salicylaldehyde dehydrogenase (nahF) (Pseudomonas putida (Arthrobacter siderocapsulatus)).